Reading from the N-terminus, the 833-residue chain is Putative GPI inositol-deacylase C (833 aa).

Residue Ser130 is part of the active site. N-linked (GlcNAc...) asparagine glycosylation is found at Asn191 and Asn456. Transmembrane regions (helical) follow at residues 521–541, 560–580, 617–637, 672–692, and 723–743; these read ILFI…QFHA, YLLT…LSQV, VLAP…TELV, TVFV…QLAF, and TICV…AVWI. N-linked (GlcNAc...) asparagine glycosylation occurs at Asn772. A helical membrane pass occupies residues 787–807; it reads LLLAYTSLHCLFYGMMQAFMI.

This sequence belongs to the GPI inositol-deacylase family.

It is found in the endoplasmic reticulum membrane. Its function is as follows. Involved in inositol deacylation of GPI-anchored proteins which plays important roles in the quality control and ER-associated degradation of GPI-anchored proteins. This chain is Putative GPI inositol-deacylase C (BST1C), found in Yarrowia lipolytica (strain CLIB 122 / E 150) (Yeast).